The chain runs to 309 residues: Protein FdhE homolog (309 aa).

The protein belongs to the FdhE family.

Its subcellular location is the cytoplasm. Necessary for formate dehydrogenase activity. The polypeptide is Protein FdhE homolog (Pseudomonas aeruginosa (strain ATCC 15692 / DSM 22644 / CIP 104116 / JCM 14847 / LMG 12228 / 1C / PRS 101 / PAO1)).